The sequence spans 421 residues: Tyrosine--tRNA ligase (421 aa).

Tyr38 contacts L-tyrosine. Positions 43–52 match the 'HIGH' region motif; that stretch reads PTGDSLHIGH. Tyr169 and Gln173 together coordinate L-tyrosine. Residues 231-235 carry the 'KMSKS' region motif; sequence KFGKS. Residue Lys234 coordinates ATP. The S4 RNA-binding domain maps to 353–419; that stretch reads KNLVDFLVDT…GKKKYTLVHI (67 aa).

It belongs to the class-I aminoacyl-tRNA synthetase family. TyrS type 1 subfamily. In terms of assembly, homodimer.

Its subcellular location is the cytoplasm. The catalysed reaction is tRNA(Tyr) + L-tyrosine + ATP = L-tyrosyl-tRNA(Tyr) + AMP + diphosphate + H(+). Its function is as follows. Catalyzes the attachment of tyrosine to tRNA(Tyr) in a two-step reaction: tyrosine is first activated by ATP to form Tyr-AMP and then transferred to the acceptor end of tRNA(Tyr). The protein is Tyrosine--tRNA ligase of Lactobacillus delbrueckii subsp. bulgaricus (strain ATCC 11842 / DSM 20081 / BCRC 10696 / JCM 1002 / NBRC 13953 / NCIMB 11778 / NCTC 12712 / WDCM 00102 / Lb 14).